The sequence spans 339 residues: DNA-directed RNA polymerase subunit alpha (339 aa).

The interval 1–233 (MVREEITGST…DLFLPFIHTE (233 aa)) is alpha N-terminal domain (alpha-NTD). The alpha C-terminal domain (alpha-CTD) stretch occupies residues 266–339 (GIPLNCIFID…IDLPKNKFSL (74 aa)).

This sequence belongs to the RNA polymerase alpha chain family. In terms of assembly, in plastids the minimal PEP RNA polymerase catalytic core is composed of four subunits: alpha, beta, beta', and beta''. When a (nuclear-encoded) sigma factor is associated with the core the holoenzyme is formed, which can initiate transcription.

The protein resides in the plastid. It localises to the chloroplast. It catalyses the reaction RNA(n) + a ribonucleoside 5'-triphosphate = RNA(n+1) + diphosphate. DNA-dependent RNA polymerase catalyzes the transcription of DNA into RNA using the four ribonucleoside triphosphates as substrates. The protein is DNA-directed RNA polymerase subunit alpha of Saccharum hybrid (Sugarcane).